The following is a 448-amino-acid chain: Squalene synthase ERG9 (448 aa).

A helical transmembrane segment spans residues 428–448; sequence CNVVLFGIGALILSLIYFVLY.

It belongs to the phytoene/squalene synthase family. Mg(2+) is required as a cofactor.

The protein resides in the endoplasmic reticulum membrane. Its subcellular location is the microsome. It catalyses the reaction 2 (2E,6E)-farnesyl diphosphate + NADPH + H(+) = squalene + 2 diphosphate + NADP(+). The enzyme catalyses 2 (2E,6E)-farnesyl diphosphate + NADH + H(+) = squalene + 2 diphosphate + NAD(+). The protein operates within terpene metabolism; lanosterol biosynthesis; lanosterol from farnesyl diphosphate: step 1/3. Functionally, squalene synthase; part of the third module of ergosterol biosynthesis pathway that includes the late steps of the pathway. ERG9 produces squalene from 2 farnesyl pyrophosphate moieties. The third module or late pathway involves the ergosterol synthesis itself through consecutive reactions that mainly occur in the endoplasmic reticulum (ER) membrane. Firstly, the squalene synthase ERG9 catalyzes the condensation of 2 farnesyl pyrophosphate moieties to form squalene, which is the precursor of all steroids. Squalene synthase is crucial for balancing the incorporation of farnesyl diphosphate (FPP) into sterol and nonsterol isoprene synthesis. Secondly, the squalene epoxidase ERG1 catalyzes the stereospecific oxidation of squalene to (S)-2,3-epoxysqualene, which is considered to be a rate-limiting enzyme in steroid biosynthesis. Then, the lanosterol synthase ERG7 catalyzes the cyclization of (S)-2,3 oxidosqualene to lanosterol, a reaction that forms the sterol core. In the next steps, lanosterol is transformed to zymosterol through a complex process involving various demethylation, reduction and desaturation reactions. The lanosterol 14-alpha-demethylase ERG11 (also known as CYP51) catalyzes C14-demethylation of lanosterol to produce 4,4'-dimethyl cholesta-8,14,24-triene-3-beta-ol, which is critical for ergosterol biosynthesis. The C-14 reductase ERG24 reduces the C14=C15 double bond of 4,4-dimethyl-cholesta-8,14,24-trienol to produce 4,4-dimethyl-cholesta-8,24-dienol. 4,4-dimethyl-cholesta-8,24-dienol is substrate of the C-4 demethylation complex ERG25-ERG26-ERG27 in which ERG25 catalyzes the three-step monooxygenation required for the demethylation of 4,4-dimethyl and 4alpha-methylsterols, ERG26 catalyzes the oxidative decarboxylation that results in a reduction of the 3-beta-hydroxy group at the C-3 carbon to an oxo group, and ERG27 is responsible for the reduction of the keto group on the C-3. ERG28 has a role as a scaffold to help anchor ERG25, ERG26 and ERG27 to the endoplasmic reticulum and ERG29 regulates the activity of the iron-containing C4-methylsterol oxidase ERG25. Then, the sterol 24-C-methyltransferase ERG6 catalyzes the methyl transfer from S-adenosyl-methionine to the C-24 of zymosterol to form fecosterol. The C-8 sterol isomerase ERG2 catalyzes the reaction which results in unsaturation at C-7 in the B ring of sterols and thus converts fecosterol to episterol. The sterol-C5-desaturase ERG3 then catalyzes the introduction of a C-5 double bond in the B ring to produce 5-dehydroepisterol. The C-22 sterol desaturase ERG5 further converts 5-dehydroepisterol into ergosta-5,7,22,24(28)-tetraen-3beta-ol by forming the C-22(23) double bond in the sterol side chain. Finally, ergosta-5,7,22,24(28)-tetraen-3beta-ol is substrate of the C-24(28) sterol reductase ERG4 to produce ergosterol. The polypeptide is Squalene synthase ERG9 (Candida albicans (strain SC5314 / ATCC MYA-2876) (Yeast)).